A 461-amino-acid chain; its full sequence is GTPase Der (461 aa).

EngA-type G domains are found at residues 25 to 188 (PVVA…PNVA) and 198 to 371 (RRVA…ASWD). Residues 31 to 38 (GRPNVGKS), 78 to 82 (DTGGW), 140 to 143 (NKVD), 204 to 211 (GKPNVGKS), 251 to 255 (DTAGL), and 316 to 319 (NKWD) each bind GTP. The KH-like domain maps to 372 to 454 (TRIATGPLNI…PIRINVRVRE (83 aa)).

The protein belongs to the TRAFAC class TrmE-Era-EngA-EngB-Septin-like GTPase superfamily. EngA (Der) GTPase family. Associates with the 50S ribosomal subunit.

In terms of biological role, GTPase that plays an essential role in the late steps of ribosome biogenesis. In Mycobacterium leprae (strain TN), this protein is GTPase Der.